Here is a 297-residue protein sequence, read N- to C-terminus: Small ribosomal subunit protein uS9m (297 aa).

A disordered region spans residues 278 to 297 (VERKKPGKRKARKMPTWVKR).

The protein belongs to the universal ribosomal protein uS9 family.

The protein localises to the mitochondrion. This is Small ribosomal subunit protein uS9m (MRPS9) from Kluyveromyces lactis (strain ATCC 8585 / CBS 2359 / DSM 70799 / NBRC 1267 / NRRL Y-1140 / WM37) (Yeast).